A 228-amino-acid chain; its full sequence is UPF0758 protein RALTA_A2508 (228 aa).

In terms of domain architecture, MPN spans 102 to 224 (GFDSPDSVRS…IRSLAESCER (123 aa)). 3 residues coordinate Zn(2+): H173, H175, and D186. The JAMM motif motif lies at 173 to 186 (HNHPRGTTAPSQSD).

This sequence belongs to the UPF0758 family.

The chain is UPF0758 protein RALTA_A2508 from Cupriavidus taiwanensis (strain DSM 17343 / BCRC 17206 / CCUG 44338 / CIP 107171 / LMG 19424 / R1) (Ralstonia taiwanensis (strain LMG 19424)).